Here is a 166-residue protein sequence, read N- to C-terminus: Heme-degrading monooxygenase HmoB (166 aa).

A Fe cation-binding site is contributed by Asn33. Positions 66–153 (FAVLNNIAVT…SAGIDTTSIF (88 aa)) constitute an ABM domain. Position 138 (His138) interacts with heme.

Belongs to the antibiotic biosynthesis monooxygenase family. In terms of assembly, homodimer.

Its subcellular location is the cytoplasm. The enzyme catalyses heme b + 3 reduced [NADPH--hemoprotein reductase] + 3 O2 = biliverdin IXalpha + CO + Fe(2+) + 3 oxidized [NADPH--hemoprotein reductase] + 3 H2O + H(+). Catalyzes the oxidative degradation of the heme macrocyclic porphyrin ring in the presence of a suitable electron donor such as ascorbate or NADPH--cytochrome P450 reductase, with subsequent release of free iron. The chain is Heme-degrading monooxygenase HmoB (hmoB) from Bacillus subtilis (strain 168).